Consider the following 816-residue polypeptide: Glycerol-3-phosphate acyltransferase (816 aa).

The HXXXXD motif motif lies at 298-303 (CHRSHM).

It belongs to the GPAT/DAPAT family.

It is found in the cell membrane. The catalysed reaction is sn-glycerol 3-phosphate + an acyl-CoA = a 1-acyl-sn-glycero-3-phosphate + CoA. It functions in the pathway phospholipid metabolism; CDP-diacylglycerol biosynthesis; CDP-diacylglycerol from sn-glycerol 3-phosphate: step 1/3. The sequence is that of Glycerol-3-phosphate acyltransferase from Hamiltonella defensa subsp. Acyrthosiphon pisum (strain 5AT).